The sequence spans 336 residues: Lipoyl synthase (336 aa).

[4Fe-4S] cluster contacts are provided by Cys81, Cys86, Cys92, Cys107, Cys111, Cys114, and Ser323. Positions Phe93–Ser312 constitute a Radical SAM core domain.

The protein belongs to the radical SAM superfamily. Lipoyl synthase family. Requires [4Fe-4S] cluster as cofactor.

The protein localises to the cytoplasm. It carries out the reaction [[Fe-S] cluster scaffold protein carrying a second [4Fe-4S](2+) cluster] + N(6)-octanoyl-L-lysyl-[protein] + 2 oxidized [2Fe-2S]-[ferredoxin] + 2 S-adenosyl-L-methionine + 4 H(+) = [[Fe-S] cluster scaffold protein] + N(6)-[(R)-dihydrolipoyl]-L-lysyl-[protein] + 4 Fe(3+) + 2 hydrogen sulfide + 2 5'-deoxyadenosine + 2 L-methionine + 2 reduced [2Fe-2S]-[ferredoxin]. It participates in protein modification; protein lipoylation via endogenous pathway; protein N(6)-(lipoyl)lysine from octanoyl-[acyl-carrier-protein]: step 2/2. Functionally, catalyzes the radical-mediated insertion of two sulfur atoms into the C-6 and C-8 positions of the octanoyl moiety bound to the lipoyl domains of lipoate-dependent enzymes, thereby converting the octanoylated domains into lipoylated derivatives. The chain is Lipoyl synthase from Stenotrophomonas maltophilia (strain K279a).